The sequence spans 256 residues: Acetoacetate decarboxylase 3 (256 aa).

K110 functions as the Schiff-base intermediate with acetoacetate in the catalytic mechanism.

Belongs to the ADC family.

The enzyme catalyses acetoacetate + H(+) = acetone + CO2. In terms of biological role, catalyzes the conversion of acetoacetate to acetone and carbon dioxide. The sequence is that of Acetoacetate decarboxylase 3 from Mesorhizobium japonicum (strain LMG 29417 / CECT 9101 / MAFF 303099) (Mesorhizobium loti (strain MAFF 303099)).